A 380-amino-acid polypeptide reads, in one-letter code: Probable polyglutamine synthesis accessory protein MT0602 (380 aa).

This sequence belongs to the CapA family.

Its function is as follows. Could be involved in the biosynthesis, transport or localization of poly-alpha-L-glutamine (PLG), a cell wall component. Contributes to stress tolerance and virulence. The chain is Probable polyglutamine synthesis accessory protein MT0602 from Mycobacterium tuberculosis (strain CDC 1551 / Oshkosh).